A 504-amino-acid chain; its full sequence is MEELRGYLELDRSWQRDFLYTLILQEYIYSLAHDHGFNRTIFLENAGYEKKYSFLIVKRLITRMYQQNHLILSANDSNQNEFWGQKKNLYYQVISEGFAFIVEIPFSLQLLFSLEGKEIVKSRNLRSIHSIFPFLEDKFSHLNYVLDILIPHPVHLEILVQTIRYWTKDASSLHLLRFFLYEYRNWNSRISIKQYISFFSNRNQRLFLFLYNSHVCEYESIFIFLRNQPSHLRSTFSGAFLERIHFYEKMEHLVKVFTKNFQVILWFFKDTFMHYVRYQGKSFVASKGTSLLMIKWKYYLVNFWQCYFSVWSQPRRIYINQLSNHSLDFMGFLSSVRLNPSVVRIQMFEKSFIIDNAINTFDTLVPNIPMIGSFAKEKFCNIFGHPISKPVWADLSDSDIIDRFGRICRSLSHYYSGSSRKKSLYRIKYILRISCARTLARKHKSTVRTFLKRLGSEFLEEFFMEEEKVLSLILPRDSYTSQRFYRGRIWYLDIFCIHDLANHE.

It belongs to the intron maturase 2 family. MatK subfamily.

The protein resides in the plastid. The protein localises to the chloroplast. Its function is as follows. Usually encoded in the trnK tRNA gene intron. Probably assists in splicing its own and other chloroplast group II introns. The polypeptide is Maturase K (Nepenthes gracilis (Slender pitcher plant)).